Here is a 313-residue protein sequence, read N- to C-terminus: Ribosomal RNA small subunit methyltransferase H (313 aa).

S-adenosyl-L-methionine contacts are provided by residues 35-37, Asp-55, Phe-79, Asp-101, and Gln-108; that span reads GGH.

Belongs to the methyltransferase superfamily. RsmH family.

It is found in the cytoplasm. It catalyses the reaction cytidine(1402) in 16S rRNA + S-adenosyl-L-methionine = N(4)-methylcytidine(1402) in 16S rRNA + S-adenosyl-L-homocysteine + H(+). Specifically methylates the N4 position of cytidine in position 1402 (C1402) of 16S rRNA. The sequence is that of Ribosomal RNA small subunit methyltransferase H from Salmonella agona (strain SL483).